We begin with the raw amino-acid sequence, 502 residues long: Glucose-6-phosphate isomerase (502 aa).

The Proton donor role is filled by Glu331. Active-site residues include His362 and Lys471.

Belongs to the GPI family.

It localises to the cytoplasm. The enzyme catalyses alpha-D-glucose 6-phosphate = beta-D-fructose 6-phosphate. It participates in carbohydrate biosynthesis; gluconeogenesis. It functions in the pathway carbohydrate degradation; glycolysis; D-glyceraldehyde 3-phosphate and glycerone phosphate from D-glucose: step 2/4. In terms of biological role, catalyzes the reversible isomerization of glucose-6-phosphate to fructose-6-phosphate. This Xylella fastidiosa (strain M12) protein is Glucose-6-phosphate isomerase.